The following is a 351-amino-acid chain: DNA polymerase IV (351 aa).

In terms of domain architecture, UmuC spans 4 to 185; it reads IIHVDMDCFY…LPLGKIPGVG (182 aa). Residues Asp8 and Asp103 each coordinate Mg(2+). The active site involves Glu104.

The protein belongs to the DNA polymerase type-Y family. Monomer. It depends on Mg(2+) as a cofactor.

It localises to the cytoplasm. The catalysed reaction is DNA(n) + a 2'-deoxyribonucleoside 5'-triphosphate = DNA(n+1) + diphosphate. Poorly processive, error-prone DNA polymerase involved in untargeted mutagenesis. Copies undamaged DNA at stalled replication forks, which arise in vivo from mismatched or misaligned primer ends. These misaligned primers can be extended by PolIV. Exhibits no 3'-5' exonuclease (proofreading) activity. May be involved in translesional synthesis, in conjunction with the beta clamp from PolIII. The polypeptide is DNA polymerase IV (Citrobacter koseri (strain ATCC BAA-895 / CDC 4225-83 / SGSC4696)).